Here is a 101-residue protein sequence, read N- to C-terminus: NAD(P)H-quinone oxidoreductase subunit 4L, chloroplastic (101 aa).

A run of 3 helical transmembrane segments spans residues 2 to 22, 32 to 52, and 61 to 81; these read ILEHVLVLSAYLFSIGIYGLI, MCLELILNSVNLNFVTFSDFF, and IFSIFIIAIAAAEAAIGLAIV.

The protein belongs to the complex I subunit 4L family. In terms of assembly, NDH is composed of at least 16 different subunits, 5 of which are encoded in the nucleus.

Its subcellular location is the plastid. It localises to the chloroplast thylakoid membrane. It carries out the reaction a plastoquinone + NADH + (n+1) H(+)(in) = a plastoquinol + NAD(+) + n H(+)(out). The enzyme catalyses a plastoquinone + NADPH + (n+1) H(+)(in) = a plastoquinol + NADP(+) + n H(+)(out). Its function is as follows. NDH shuttles electrons from NAD(P)H:plastoquinone, via FMN and iron-sulfur (Fe-S) centers, to quinones in the photosynthetic chain and possibly in a chloroplast respiratory chain. The immediate electron acceptor for the enzyme in this species is believed to be plastoquinone. Couples the redox reaction to proton translocation, and thus conserves the redox energy in a proton gradient. The sequence is that of NAD(P)H-quinone oxidoreductase subunit 4L, chloroplastic from Oenothera argillicola (Appalachian evening primrose).